The sequence spans 348 residues: Phosphate acyltransferase (348 aa).

Belongs to the PlsX family. Homodimer. Probably interacts with PlsY.

The protein localises to the cytoplasm. It carries out the reaction a fatty acyl-[ACP] + phosphate = an acyl phosphate + holo-[ACP]. It participates in lipid metabolism; phospholipid metabolism. Catalyzes the reversible formation of acyl-phosphate (acyl-PO(4)) from acyl-[acyl-carrier-protein] (acyl-ACP). This enzyme utilizes acyl-ACP as fatty acyl donor, but not acyl-CoA. The sequence is that of Phosphate acyltransferase from Lactiplantibacillus plantarum (strain ATCC BAA-793 / NCIMB 8826 / WCFS1) (Lactobacillus plantarum).